The chain runs to 907 residues: Protein translocase subunit SecA (907 aa).

Residues Q87, 105 to 109, and D512 each bind ATP; that span reads GEGKT. The interval 862–885 is disordered; it reads AENQLDDGHSSDQNHSPMVRDERK. Basic and acidic residues predominate over residues 867–885; that stretch reads DDGHSSDQNHSPMVRDERK. Zn(2+)-binding residues include C892, C894, C903, and H904.

The protein belongs to the SecA family. Monomer and homodimer. Part of the essential Sec protein translocation apparatus which comprises SecA, SecYEG and auxiliary proteins SecDF-YajC and YidC. It depends on Zn(2+) as a cofactor.

The protein resides in the cell inner membrane. The protein localises to the cytoplasm. It carries out the reaction ATP + H2O + cellular proteinSide 1 = ADP + phosphate + cellular proteinSide 2.. Part of the Sec protein translocase complex. Interacts with the SecYEG preprotein conducting channel. Has a central role in coupling the hydrolysis of ATP to the transfer of proteins into and across the cell membrane, serving both as a receptor for the preprotein-SecB complex and as an ATP-driven molecular motor driving the stepwise translocation of polypeptide chains across the membrane. The polypeptide is Protein translocase subunit SecA (Aliivibrio salmonicida (strain LFI1238) (Vibrio salmonicida (strain LFI1238))).